A 91-amino-acid polypeptide reads, in one-letter code: Long neurotoxin OH-56 (91 aa).

A signal peptide spans 1–21; the sequence is MKTLLLTLVVVTIMCLDLGYT. Intrachain disulfides connect cysteine 24–cysteine 42, cysteine 35–cysteine 63, cysteine 48–cysteine 52, cysteine 67–cysteine 78, and cysteine 79–cysteine 84.

This sequence belongs to the three-finger toxin family. Long-chain subfamily. Type II alpha-neurotoxin sub-subfamily. As to expression, expressed by the venom gland.

The protein resides in the secreted. In terms of biological role, binds with high affinity to muscular (alpha-1/CHRNA1) and neuronal (alpha-7/CHRNA7) nicotinic acetylcholine receptor (nAChR) and inhibits acetylcholine from binding to the receptor, thereby impairing neuromuscular and neuronal transmission. This is Long neurotoxin OH-56 from Ophiophagus hannah (King cobra).